A 147-amino-acid chain; its full sequence is Small ribosomal subunit protein uS12 (147 aa).

The protein belongs to the universal ribosomal protein uS12 family. In terms of assembly, part of the 30S ribosomal subunit.

In terms of biological role, with S4 and S5 plays an important role in translational accuracy. Located at the interface of the 30S and 50S subunits. This Pyrobaculum arsenaticum (strain DSM 13514 / JCM 11321 / PZ6) protein is Small ribosomal subunit protein uS12.